We begin with the raw amino-acid sequence, 430 residues long: Dihydroorotase (430 aa).

Residues His-61 and His-63 each contribute to the Zn(2+) site. Residues 63–65 (HLR) and Asn-95 contribute to the substrate site. Positions 153, 180, and 233 each coordinate Zn(2+). Asn-279 serves as a coordination point for substrate. Asp-306 is a binding site for Zn(2+). Asp-306 is a catalytic residue. Residue His-310 participates in substrate binding.

This sequence belongs to the metallo-dependent hydrolases superfamily. DHOase family. Class I DHOase subfamily. The cofactor is Zn(2+).

It catalyses the reaction (S)-dihydroorotate + H2O = N-carbamoyl-L-aspartate + H(+). It participates in pyrimidine metabolism; UMP biosynthesis via de novo pathway; (S)-dihydroorotate from bicarbonate: step 3/3. Functionally, catalyzes the reversible cyclization of carbamoyl aspartate to dihydroorotate. This chain is Dihydroorotase, found in Caldicellulosiruptor saccharolyticus (strain ATCC 43494 / DSM 8903 / Tp8T 6331).